Reading from the N-terminus, the 307-residue chain is MKLTLNRILFSGLALSILFTLTGCVGRDAHGNPKGMIWEFLGKPMSYFIDYFANNAGLGYGLAIIIVTIIVRTLILPLGLYQSWKASYQSEKMAFLKPVFEPINKRIKQANSQEEKMAAQTELMAAQRAHGINPLGGIGCLPLLIQMPFFSAMYFAAQYTKGVSTSTFMGIDLGSRSLVLTAIIAALYFFQSWLSMMAVSEEQREQMKTMMYTMPIMMIFMSFSLPAGVGLYWLVGGFFSIIQQLITTYLLKPRLHKQIKEEYAKNPPKAYQSTSSRKDVTPSQNMEQANLPKKIKSNRNAGKQRKR.

Positions 1 to 23 are cleaved as a signal peptide; it reads MKLTLNRILFSGLALSILFTLTG. Cys-24 carries the N-palmitoyl cysteine lipid modification. Cys-24 carries S-diacylglycerol cysteine lipidation. 5 helical membrane-spanning segments follow: residues 58 to 78, 135 to 155, 179 to 199, 209 to 225, and 231 to 251; these read LGYG…ILPL, LGGI…AMYF, VLTA…MMAV, TMMY…SFSL, and LYWL…TYLL. The tract at residues 263 to 307 is disordered; sequence YAKNPPKAYQSTSSRKDVTPSQNMEQANLPKKIKSNRNAGKQRKR. Polar residues predominate over residues 271–288; sequence YQSTSSRKDVTPSQNMEQ. Over residues 293–307 the composition is skewed to basic residues; the sequence is KKIKSNRNAGKQRKR.

It belongs to the OXA1/ALB3/YidC family. Type 2 subfamily.

The protein localises to the cell membrane. Functionally, required for the insertion and/or proper folding and/or complex formation of integral membrane proteins into the membrane. Involved in integration of membrane proteins that insert both dependently and independently of the Sec translocase complex, as well as at least some lipoproteins. This is Membrane protein insertase YidC 2 from Streptococcus pyogenes serotype M3 (strain ATCC BAA-595 / MGAS315).